Consider the following 570-residue polypeptide: Glycine--tRNA ligase (570 aa).

2 residues coordinate substrate: Arg95 and Glu159. Residues 191–193, 201–206, 312–313, and 426–429 contribute to the ATP site; these read RNE, IRLREF, EV, and GLDR. Position 206–210 (206–210) interacts with substrate; it reads FNQAE. 422-426 lines the substrate pocket; that stretch reads EPSFG.

This sequence belongs to the class-II aminoacyl-tRNA synthetase family.

It localises to the cytoplasm. The catalysed reaction is tRNA(Gly) + glycine + ATP = glycyl-tRNA(Gly) + AMP + diphosphate. Its function is as follows. Catalyzes the attachment of glycine to tRNA(Gly). This Archaeoglobus fulgidus (strain ATCC 49558 / DSM 4304 / JCM 9628 / NBRC 100126 / VC-16) protein is Glycine--tRNA ligase.